The primary structure comprises 560 residues: 2-isopropylmalate synthase (560 aa).

Positions 30–303 (PVWCSVDLRD…DPEIDCSNIE (274 aa)) constitute a Pyruvate carboxyltransferase domain. Mg(2+)-binding residues include D39, H242, H244, and N278. The interval 437 to 560 (QPEGRLRFVD…RVLDVKAGKA (124 aa)) is regulatory domain.

Belongs to the alpha-IPM synthase/homocitrate synthase family. LeuA type 2 subfamily. In terms of assembly, homodimer. Mg(2+) is required as a cofactor.

The protein localises to the cytoplasm. It catalyses the reaction 3-methyl-2-oxobutanoate + acetyl-CoA + H2O = (2S)-2-isopropylmalate + CoA + H(+). The protein operates within amino-acid biosynthesis; L-leucine biosynthesis; L-leucine from 3-methyl-2-oxobutanoate: step 1/4. Functionally, catalyzes the condensation of the acetyl group of acetyl-CoA with 3-methyl-2-oxobutanoate (2-ketoisovalerate) to form 3-carboxy-3-hydroxy-4-methylpentanoate (2-isopropylmalate). The chain is 2-isopropylmalate synthase from Rhizobium johnstonii (strain DSM 114642 / LMG 32736 / 3841) (Rhizobium leguminosarum bv. viciae).